A 497-amino-acid polypeptide reads, in one-letter code: Penton protein (497 aa).

The short motif at 293-295 is the Cell attachment site element; sequence RGD.

It belongs to the adenoviridae penton family. Interacts (via the cell attachment site RGD) with host heterodimer ITGAV-ITGB5; this interaction promotes virus internalization. Interacts with host WWP1 and WWP2. Interacts with the fiber protein (via N-terminal tail region). Interacts with the capsid vertex protein; this interaction binds the penton base to neighboring peripentonal hexons.

The protein localises to the virion. It is found in the host nucleus. In terms of biological role, major capsid protein that self-associates to form penton base pentamers, each in the shape of a pentagon, situated at the 12 vertices of the pseudo T=25 capsid. Involved in virus secondary attachment to host cell after initial attachment by the fiber protein. Binds host integrin heterodimer ITGAV-ITGB5 (alphaV-beta5) thereby triggering clathrin-mediated endocytosis of virions. Mediates initial virus attachment to CXADR-negative cells. Binding to integrins ITGAV-ITGB5 also seems to induce macropinocytosis uptake of the virus. As the virus enters the host cell, penton proteins are shed concomitant with virion acidification in the endosome. The polypeptide is Penton protein (Human adenovirus A serotype 12 (HAdV-12)).